Consider the following 701-residue polypeptide: Elongation factor G (701 aa).

The tr-type G domain maps to 11–287 (TKVRNIGIMA…AVIDYLPSPL (277 aa)). Residues 20-27 (AHIDAGKT), 84-88 (DTPGH), and 138-141 (NKMD) contribute to the GTP site.

The protein belongs to the TRAFAC class translation factor GTPase superfamily. Classic translation factor GTPase family. EF-G/EF-2 subfamily.

It localises to the cytoplasm. Functionally, catalyzes the GTP-dependent ribosomal translocation step during translation elongation. During this step, the ribosome changes from the pre-translocational (PRE) to the post-translocational (POST) state as the newly formed A-site-bound peptidyl-tRNA and P-site-bound deacylated tRNA move to the P and E sites, respectively. Catalyzes the coordinated movement of the two tRNA molecules, the mRNA and conformational changes in the ribosome. This Mycobacterium avium (strain 104) protein is Elongation factor G.